The chain runs to 172 residues: NAD(P)H-quinone oxidoreductase subunit J (172 aa).

Belongs to the complex I 30 kDa subunit family. In terms of assembly, NDH-1 can be composed of about 15 different subunits; different subcomplexes with different compositions have been identified which probably have different functions.

The protein localises to the cellular thylakoid membrane. The enzyme catalyses a plastoquinone + NADH + (n+1) H(+)(in) = a plastoquinol + NAD(+) + n H(+)(out). It carries out the reaction a plastoquinone + NADPH + (n+1) H(+)(in) = a plastoquinol + NADP(+) + n H(+)(out). NDH-1 shuttles electrons from an unknown electron donor, via FMN and iron-sulfur (Fe-S) centers, to quinones in the respiratory and/or the photosynthetic chain. The immediate electron acceptor for the enzyme in this species is believed to be plastoquinone. Couples the redox reaction to proton translocation, and thus conserves the redox energy in a proton gradient. Cyanobacterial NDH-1 also plays a role in inorganic carbon-concentration. The sequence is that of NAD(P)H-quinone oxidoreductase subunit J from Synechococcus sp. (strain ATCC 27144 / PCC 6301 / SAUG 1402/1) (Anacystis nidulans).